We begin with the raw amino-acid sequence, 206 residues long: Large ribosomal subunit protein uL4 (206 aa).

The disordered stretch occupies residues 45 to 78 (QGNRAQKDREQVKHTTKKPWRQKGTGRARAGMSS). Positions 58–70 (HTTKKPWRQKGTG) are enriched in basic residues.

The protein belongs to the universal ribosomal protein uL4 family. In terms of assembly, part of the 50S ribosomal subunit.

In terms of biological role, one of the primary rRNA binding proteins, this protein initially binds near the 5'-end of the 23S rRNA. It is important during the early stages of 50S assembly. It makes multiple contacts with different domains of the 23S rRNA in the assembled 50S subunit and ribosome. Forms part of the polypeptide exit tunnel. The sequence is that of Large ribosomal subunit protein uL4 from Burkholderia ambifaria (strain MC40-6).